A 214-amino-acid chain; its full sequence is ATP synthase subunit 5, mitochondrial (214 aa).

The transit peptide at 1–24 (MFASRAIRMMSMRPMARTMATKAA) directs the protein to the mitochondrion.

In terms of assembly, F-type ATP synthases have 2 components, the catalytic core F(1) and the membrane-embedded component F(0), linked together by a central stalk and a peripheral stalk. The central stalk, also called rotor shaft, is often seen as part of F(1). The peripheral stalk is seen as part of F(0). F(0) contains the membrane channel next to the rotor. F-type ATP synthases form dimers but each monomer functions independently in ATP generation. The dimer consists of 17 different polypeptides: ATP1 (subunit alpha, 3 molecules per monomer, part of F(1)), ATP2 (subunit beta, 3 copies per monomer, part of F(1)), ATP3 (subunit gamma, part of the central stalk), ATP4 (subunit b, part of the peripheral stalk), ATP5/OSCP (subunit 5/OSCP, part of the peripheral stalk), ATP6 (subunit a, part of the peripheral stalk), ATP7 (subunit d, part of the peripheral stalk), ATP8 (subunit 8, part of the peripheral stalk), OLI1 (subunit c, part of the rotor, 10 molecules per monomer), ATP14 (subunit h, part of the peripheral stalk), ATP15 (subunit epsilon, part of the central stalk), ATP16 (subunit delta, part of the central stalk), ATP17 (subunit f, part of the peripheral stalk), ATP18 (subunit i/j, part of the peripheral stalk), ATP19 (subunit k, dimer-specific, at interface between monomers), ATP20 (subunit g, at interface between monomers), TIM11 (subunit e, at interface between monomers).

It localises to the mitochondrion inner membrane. Mitochondrial membrane ATP synthase (F(1)F(0) ATP synthase or Complex V) produces ATP from ADP in the presence of a proton gradient across the membrane which is generated by electron transport complexes of the respiratory chain. F-type ATP synthases consist of two structural domains, F(1) - containing the extramembraneous catalytic core, and F(0) - containing the membrane proton channel, linked together by a central stalk and a peripheral stalk. During catalysis, ATP synthesis in the catalytic domain of F(1) is coupled via a rotary mechanism of the central stalk subunits to proton translocation. Part of the complex F(0) domain and the peripheral stalk, which acts as a stator to hold the catalytic alpha/ATP1(3)beta/ATP2(3) subcomplex and subunit a/ATP6 static relative to the rotary elements. This is ATP synthase subunit 5, mitochondrial from Yarrowia lipolytica (strain CLIB 122 / E 150) (Yeast).